A 149-amino-acid polypeptide reads, in one-letter code: General odorant-binding protein 99b (149 aa).

An N-terminal signal peptide occupies residues 1-16 (MKVLIVLLLGLAFVLA). 3 disulfide bridges follow: cysteine 40–cysteine 71, cysteine 67–cysteine 125, and cysteine 114–cysteine 134.

Belongs to the PBP/GOBP family. As to expression, expressed in adult olfactory system. Expressed in subsets of sensilla in both olfactory organs, the maxillary palps, and third antennal segments.

Its subcellular location is the secreted. In terms of biological role, present in the aqueous fluid surrounding olfactory sensory dendrites and are thought to aid in the capture and transport of hydrophobic odorants into and through this fluid. The polypeptide is General odorant-binding protein 99b (Obp99b) (Drosophila melanogaster (Fruit fly)).